A 309-amino-acid polypeptide reads, in one-letter code: Protein FdhE (309 aa).

The protein belongs to the FdhE family.

It localises to the cytoplasm. Its function is as follows. Necessary for formate dehydrogenase activity. This chain is Protein FdhE, found in Salmonella enteritidis PT4 (strain P125109).